We begin with the raw amino-acid sequence, 640 residues long: DNA topoisomerase 3 (640 aa).

The Toprim domain maps to 21–175; that stretch reads RVLCVAEKNS…WRAQFSHLEP (155 aa). Mg(2+)-binding residues include E27, D137, and D139. In terms of domain architecture, Topo IA-type catalytic spans 189-618; that stretch reads DMKLVAAVEC…QLLPLYKEAF (430 aa). Y354 (O-(5'-phospho-DNA)-tyrosine intermediate) is an active-site residue.

It belongs to the type IA topoisomerase family. It depends on Mg(2+) as a cofactor.

The enzyme catalyses ATP-independent breakage of single-stranded DNA, followed by passage and rejoining.. In terms of biological role, introduces a single-strand break via transesterification at a target site in duplex DNA. Releases the supercoiling and torsional tension of DNA introduced during the DNA replication and transcription by transiently cleaving and rejoining one strand of the DNA duplex. The scissile phosphodiester is attacked by the catalytic tyrosine of the enzyme, resulting in the formation of a DNA-(5'-phosphotyrosyl)-enzyme intermediate and the expulsion of a 3'-OH DNA strand. This is DNA topoisomerase 3 (TOP3) from Candidozyma auris (Yeast).